A 368-amino-acid polypeptide reads, in one-letter code: Alanine racemase (368 aa).

Lys40 serves as the catalytic Proton acceptor; specific for D-alanine. Lys40 carries the post-translational modification N6-(pyridoxal phosphate)lysine. Residue Arg134 coordinates substrate. The active-site Proton acceptor; specific for L-alanine is Tyr263. Met310 provides a ligand contact to substrate.

This sequence belongs to the alanine racemase family. Pyridoxal 5'-phosphate serves as cofactor.

It catalyses the reaction L-alanine = D-alanine. It functions in the pathway amino-acid biosynthesis; D-alanine biosynthesis; D-alanine from L-alanine: step 1/1. Its function is as follows. Catalyzes the interconversion of L-alanine and D-alanine. May also act on other amino acids. This is Alanine racemase (alr) from Listeria monocytogenes serotype 4b (strain CLIP80459).